A 250-amino-acid polypeptide reads, in one-letter code: Cobalt transport protein CbiM (250 aa).

The N-terminal stretch at 1–25 (MKQNIKLGVIAALMLIVLTPVTSNA) is a signal peptide. 6 helical membrane-spanning segments follow: residues 33 to 53 (LPVK…LVGL), 68 to 88 (VLLA…IPSV), 100 to 120 (LGAI…VLIF), 132 to 152 (TLGA…FLIF), 163 to 183 (AMPV…VTSI), and 205 to 225 (GIFF…TVIV).

It belongs to the CbiM family. Forms an energy-coupling factor (ECF) transporter complex composed of an ATP-binding protein (A component, CbiO), a transmembrane protein (T component, CbiQ) and 2 possible substrate-capture proteins (S components, CbiM and CbiN) of unknown stoichimetry.

The protein resides in the cell membrane. The protein operates within cofactor biosynthesis; adenosylcobalamin biosynthesis. In terms of biological role, part of the energy-coupling factor (ECF) transporter complex CbiMNOQ involved in cobalt import. The sequence is that of Cobalt transport protein CbiM from Clostridioides difficile (strain R20291) (Peptoclostridium difficile).